The chain runs to 706 residues: Translation initiation factor IF-2 (706 aa).

The tract at residues 55 to 117 (KEVNSDSNQE…PTMKDEKGLI (63 aa)) is disordered. Positions 67–81 (VNTDDKLDKIDKPNK) are enriched in basic and acidic residues. The span at 93–108 (KNKKSKKKQKNKKKGP) shows a compositional bias: basic residues. The region spanning 208-375 (SRPPVVTVMG…MILLVSEVEE (168 aa)) is the tr-type G domain. Positions 217–224 (GHVDHGKT) are G1. 217–224 (GHVDHGKT) is a GTP binding site. Residues 242-246 (GITQH) are G2. The G3 stretch occupies residues 263–266 (DTPG). GTP is bound by residues 263–267 (DTPGH) and 317–320 (NKID). Positions 317 to 320 (NKID) are G4. The G5 stretch occupies residues 353–355 (SAI).

This sequence belongs to the TRAFAC class translation factor GTPase superfamily. Classic translation factor GTPase family. IF-2 subfamily.

The protein localises to the cytoplasm. Functionally, one of the essential components for the initiation of protein synthesis. Protects formylmethionyl-tRNA from spontaneous hydrolysis and promotes its binding to the 30S ribosomal subunits. Also involved in the hydrolysis of GTP during the formation of the 70S ribosomal complex. This chain is Translation initiation factor IF-2, found in Alkaliphilus metalliredigens (strain QYMF).